The sequence spans 316 residues: Olfactory receptor 51J1 (316 aa).

At 1–31 (MKISNNSLGFLPTTFILVGIPGLESEHLWIS) the chain is on the extracellular side. A glycan (N-linked (GlcNAc...) asparagine) is linked at N5. A helical transmembrane segment spans residues 32 to 52 (VPFSLIYIIIFLGNGIILHVI). Over 53 to 63 (RTDIALHQPMY) the chain is Cytoplasmic. A helical membrane pass occupies residues 64-84 (LFLAMLALAEVRVSASTLPTV). Over 85-104 (LGIFLFGNTEISLEACLFPD) the chain is Extracellular. C100 and C191 are oxidised to a cystine. A helical membrane pass occupies residues 105–125 (VLHPFFIHDGASCAAGHVFGP). At 126-161 (LYSHLQPTELHSYPDTAQGLWHRSYYRTEKHYAHGS) the chain is on the cytoplasmic side. The helical transmembrane segment at 162 to 182 (VAHSLMASALLWPQCPLTFLL) threads the bilayer. Residues 183 to 191 (SAPQSYLSC) are Extracellular-facing. A helical membrane pass occupies residues 192-212 (GNISVNNIYGIFIVTSTFGLD). The Cytoplasmic segment spans residues 213 to 242 (SLLIVISYGLILHTVLGIATGEGRKKALNT). A helical membrane pass occupies residues 243–263 (CGSHVCAVLAYYVPMIGLSIV). Residues 264-275 (HRLGHRVSPLLQ) are Extracellular-facing. A helical membrane pass occupies residues 276–296 (AMMANAYLFFPPVVNPIVYSI). Residues 297–316 (KTKEIHGAIVRMLLEKRRRV) lie on the Cytoplasmic side of the membrane.

The protein belongs to the G-protein coupled receptor 1 family.

Its subcellular location is the cell membrane. Odorant receptor. This Homo sapiens (Human) protein is Olfactory receptor 51J1 (OR51J1).